We begin with the raw amino-acid sequence, 321 residues long: Peroxidase 70 (321 aa).

Residues 1 to 25 (MASSSFTSLSVMVLLCLAAAAVASA) form the signal peptide. A Pyrrolidone carboxylic acid modification is found at Gln26. 4 cysteine pairs are disulfide-bonded: Cys36/Cys116, Cys69/Cys74, Cys122/Cys317, and Cys201/Cys226. The active-site Proton acceptor is His67. The Ca(2+) site is built by Asp68, Val71, Gly73, Asp75, and Ser77. The N-linked (GlcNAc...) asparagine glycan is linked to Asn81. Pro164 lines the substrate pocket. The N-linked (GlcNAc...) asparagine glycan is linked to Asn172. His194 serves as a coordination point for heme b. Thr195 is a binding site for Ca(2+). Asn210 carries N-linked (GlcNAc...) asparagine glycosylation. Ca(2+) is bound by residues Asp241, Thr244, and Asp249.

The protein belongs to the peroxidase family. Classical plant (class III) peroxidase subfamily. The cofactor is heme b. It depends on Ca(2+) as a cofactor.

Its subcellular location is the secreted. It carries out the reaction 2 a phenolic donor + H2O2 = 2 a phenolic radical donor + 2 H2O. Functionally, removal of H(2)O(2), oxidation of toxic reductants, biosynthesis and degradation of lignin, suberization, auxin catabolism, response to environmental stresses such as wounding, pathogen attack and oxidative stress. These functions might be dependent on each isozyme/isoform in each plant tissue. This is Peroxidase 70 (PER70) from Zea mays (Maize).